The primary structure comprises 471 residues: BRISC complex subunit FAM175B (471 aa).

The MPN domain maps to 7-161 (LVTISGAALS…THKFRHVFLR (155 aa)). Residues 245–272 (ESDLEVAELEKQVHELKIKIATQQLAKR) are a coiled coil. Residues 343–445 (AEKSRRAGRS…FSDAECPISS (103 aa)) form a disordered region. Low complexity predominate over residues 359–370 (NQQQETQNFFTN).

Belongs to the FAM175 family. Abro1 subfamily. In terms of assembly, component of the BRISC complex, at least composed of FAM175B/ABRO1, BRCC3/BRCC36, BABAM2 and BABAM1/NBA1. Within the complex, interacts directly with BRCC3/BRCC36. The heterodimer with BRCC3/BRCC36 assembles into a heterotetramer. The BRISC complex binds polyubiquitin.

It is found in the cytoplasm. The protein localises to the nucleus. The protein resides in the cytoskeleton. Its subcellular location is the spindle pole. Functionally, component of the BRISC complex that specifically cleaves 'Lys-63'-linked polyubiquitin, leaving the last ubiquitin chain attached to its substrates. Does not have activity by itself, but the catalytic subunit BRCC3/BRCC36 needs to be associated into a heterotetramer with FAM175B for minimal in vitro activity. May act as a central scaffold protein that assembles the various components of the BRISC complex and retains them in the cytoplasm. Plays a role in regulating the onset of apoptosis via its role in modulating 'Lys-63'-linked ubiquitination of target proteins. Required for normal mitotic spindle assembly and microtubule attachment to kinetochores via its role in deubiquitinating numa1. The protein is BRISC complex subunit FAM175B of Camponotus floridanus (Florida carpenter ant).